We begin with the raw amino-acid sequence, 123 residues long: MPTIQQLVRKGRTDKISKNKTPALKGSPQRRGVCTRVYTTTPKKPNSALRKVARVRLSSGIEVTAYIPGVGHNLQEHSMVLVRGGRVKDLPGVRYKIVRGSLDTQGVKGRKQARSRYGAKKEK.

Residues 1-32 form a disordered region; it reads MPTIQQLVRKGRTDKISKNKTPALKGSPQRRG. Asp89 carries the 3-methylthioaspartic acid modification. The segment at 103 to 123 is disordered; that stretch reads DTQGVKGRKQARSRYGAKKEK. Over residues 108–123 the composition is skewed to basic residues; the sequence is KGRKQARSRYGAKKEK.

This sequence belongs to the universal ribosomal protein uS12 family. Part of the 30S ribosomal subunit. Contacts proteins S8 and S17. May interact with IF1 in the 30S initiation complex.

Its function is as follows. With S4 and S5 plays an important role in translational accuracy. In terms of biological role, interacts with and stabilizes bases of the 16S rRNA that are involved in tRNA selection in the A site and with the mRNA backbone. Located at the interface of the 30S and 50S subunits, it traverses the body of the 30S subunit contacting proteins on the other side and probably holding the rRNA structure together. The combined cluster of proteins S8, S12 and S17 appears to hold together the shoulder and platform of the 30S subunit. This Cutibacterium acnes (strain DSM 16379 / KPA171202) (Propionibacterium acnes) protein is Small ribosomal subunit protein uS12.